Consider the following 75-residue polypeptide: Translational regulator CsrA (75 aa).

The protein belongs to the CsrA/RsmA family. Homodimer; the beta-strands of each monomer intercalate to form a hydrophobic core, while the alpha-helices form wings that extend away from the core.

It localises to the cytoplasm. Its function is as follows. A translational regulator that binds mRNA to regulate translation initiation and/or mRNA stability. Usually binds in the 5'-UTR at or near the Shine-Dalgarno sequence preventing ribosome-binding, thus repressing translation. Its main target seems to be the major flagellin gene, while its function is anatagonized by FliW. This is Translational regulator CsrA from Acetivibrio thermocellus (strain ATCC 27405 / DSM 1237 / JCM 9322 / NBRC 103400 / NCIMB 10682 / NRRL B-4536 / VPI 7372) (Clostridium thermocellum).